The following is a 754-amino-acid chain: Protein NUCLEOLAR FACTOR 1 (754 aa).

Disordered stretches follow at residues 1 to 56 (MAPN…EAMV), 69 to 166 (SLGS…ELST), and 390 to 413 (EDTD…QKSS). Acidic residues predominate over residues 42-52 (SPEESSIEAES). Over residues 80 to 93 (MNKRRQREEEGKSD) the composition is skewed to basic and acidic residues. Composition is skewed to acidic residues over residues 94 to 110 (TEED…ENSG) and 138 to 161 (DTQE…DEEV). Over residues 402 to 413 (SKNGNSIKQKSS) the composition is skewed to polar residues.

This sequence belongs to the UTP25 family. Component of the ribosomal small subunit (SSU) processome composed of at least 40 protein subunits and snoRNA U3. Interacts with THAL in the nucleus. Preferentially expressed in differentiating cells in young tissues such as floral buds, ovules, embryos, secondary roots, pollen, young seedlings and vascular bundles. Observed ubiquitously.

It is found in the nucleus. The protein localises to the nucleolus. In terms of biological role, DEAD-box RNA helicase-like protein required for pre-18S rRNA processing, specifically at sites A0, A1, and A2. Involved in the control of rRNA expression. Required for embryo development and female gametogenesis. This Arabidopsis thaliana (Mouse-ear cress) protein is Protein NUCLEOLAR FACTOR 1.